A 130-amino-acid polypeptide reads, in one-letter code: Holin-like protein CidA (130 aa).

4 helical membrane-spanning segments follow: residues 6–26, 31–51, 65–85, and 93–113; these read FVIKLILQLALIMLITFIGTE, LHIPLAGSIVGLMLFFLLLQF, FLLKTMVFFFIPSVVGIMDVA, and ILFFIVIIIGTCLVALSSGYI.

This sequence belongs to the CidA/LrgA family. CidA subfamily.

The protein localises to the cell membrane. Functionally, increases the activity of extracellular murein hydrolases possibly by mediating their export via hole formation. Inhibited by the antiholin-like proteins LrgAB. In an unstressed cell, the LrgAB products probably inhibit the function of the CidAB proteins. When a cell is stressed by the addition of antibiotics or by other factors in the environment, the CidAB proteins possibly oligomerize within the bacterial cell membrane, creating lesions that disrupt the proton motive force, which in turn results in loss of cell viability. These lesions are also hypothesized to regulate the subsequent cell lysis by either allowing the murein hydrolases access to the cell wall substrate and/or regulating their activity by a possible change in the cell wall pH that results from loss of membrane potential. The sequence is that of Holin-like protein CidA from Staphylococcus epidermidis (strain ATCC 35984 / DSM 28319 / BCRC 17069 / CCUG 31568 / BM 3577 / RP62A).